Here is a 351-residue protein sequence, read N- to C-terminus: Foldase protein PrsA 1 (351 aa).

Positions 1-22 are cleaved as a signal peptide; it reads MKNSNKLIASVVTLASVMALAA. The N-palmitoyl cysteine moiety is linked to residue cysteine 23. Cysteine 23 is lipidated: S-diacylglycerol cysteine. The region spanning 145–240 is the PpiC domain; it reads TPTMAVEMIT…KKFYIVKVTK (96 aa). Low complexity-rich tracts occupy residues 303–317 and 326–351; these read KTKAASESSTTSESS and ESEQTQTSSAEEPTETEAQTQEPAAQ. Residues 303-351 are disordered; that stretch reads KTKAASESSTTSESSKAAEENPSESEQTQTSSAEEPTETEAQTQEPAAQ.

Belongs to the PrsA family.

The protein localises to the cell membrane. The catalysed reaction is [protein]-peptidylproline (omega=180) = [protein]-peptidylproline (omega=0). In terms of biological role, plays a major role in protein secretion by helping the post-translocational extracellular folding of several secreted proteins. In Streptococcus pyogenes serotype M1, this protein is Foldase protein PrsA 1 (prsA1).